The primary structure comprises 371 residues: Mitogen-activated protein kinase homolog NTF6 (371 aa).

One can recognise a Protein kinase domain in the interval 38–324 (IPPIQPVGRG…VEDALNHPFL (287 aa)). Residues 44–52 (VGRGAYGMV) and lysine 67 each bind ATP. Aspartate 164 functions as the Proton acceptor in the catalytic mechanism. The residue at position 196 (threonine 196) is a Phosphothreonine. A TXY motif is present at residues 196–198 (TEY). Position 198 is a phosphotyrosine (tyrosine 198).

This sequence belongs to the protein kinase superfamily. CMGC Ser/Thr protein kinase family. MAP kinase subfamily. Mg(2+) serves as cofactor. Post-translationally, dually phosphorylated on Thr-196 and Tyr-198, which activates the enzyme. Very low autophosphorylation, although dramatically increased when Mn(2+) is added to the reaction instead of Mg(2+).

It catalyses the reaction L-seryl-[protein] + ATP = O-phospho-L-seryl-[protein] + ADP + H(+). It carries out the reaction L-threonyl-[protein] + ATP = O-phospho-L-threonyl-[protein] + ADP + H(+). Its activity is regulated as follows. Activated by tyrosine and threonine phosphorylation. The sequence is that of Mitogen-activated protein kinase homolog NTF6 (NTF6) from Nicotiana tabacum (Common tobacco).